The sequence spans 79 residues: Small ribosomal subunit protein uS17 (79 aa).

Belongs to the universal ribosomal protein uS17 family. Part of the 30S ribosomal subunit.

In terms of biological role, one of the primary rRNA binding proteins, it binds specifically to the 5'-end of 16S ribosomal RNA. The polypeptide is Small ribosomal subunit protein uS17 (Roseobacter denitrificans (strain ATCC 33942 / OCh 114) (Erythrobacter sp. (strain OCh 114))).